Consider the following 379-residue polypeptide: Carbamoyl phosphate synthase small chain (379 aa).

The interval 1 to 187 (MNFTPALLAL…GSGHAPAPAS (187 aa)) is CPSase. 3 residues coordinate L-glutamine: S48, G239, and G241. The Glutamine amidotransferase type-1 domain occupies 191–378 (KVVAYDFGVK…IELMKPQGVR (188 aa)). Residue C267 is the Nucleophile of the active site. 5 residues coordinate L-glutamine: L268, Q271, N309, G311, and F312. Residues H351 and E353 contribute to the active site.

Belongs to the CarA family. Composed of two chains; the small (or glutamine) chain promotes the hydrolysis of glutamine to ammonia, which is used by the large (or ammonia) chain to synthesize carbamoyl phosphate. Tetramer of heterodimers (alpha,beta)4.

The enzyme catalyses hydrogencarbonate + L-glutamine + 2 ATP + H2O = carbamoyl phosphate + L-glutamate + 2 ADP + phosphate + 2 H(+). It carries out the reaction L-glutamine + H2O = L-glutamate + NH4(+). The protein operates within amino-acid biosynthesis; L-arginine biosynthesis; carbamoyl phosphate from bicarbonate: step 1/1. Its pathway is pyrimidine metabolism; UMP biosynthesis via de novo pathway; (S)-dihydroorotate from bicarbonate: step 1/3. In terms of biological role, small subunit of the glutamine-dependent carbamoyl phosphate synthetase (CPSase). CPSase catalyzes the formation of carbamoyl phosphate from the ammonia moiety of glutamine, carbonate, and phosphate donated by ATP, constituting the first step of 2 biosynthetic pathways, one leading to arginine and/or urea and the other to pyrimidine nucleotides. The small subunit (glutamine amidotransferase) binds and cleaves glutamine to supply the large subunit with the substrate ammonia. This is Carbamoyl phosphate synthase small chain from Thioalkalivibrio sulfidiphilus (strain HL-EbGR7).